Here is a 205-residue protein sequence, read N- to C-terminus: Imidazoleglycerol-phosphate dehydratase (205 aa).

A disordered region spans residues 1 to 27 (MKQASPRAGGAKARRGQVARKTKETDV).

It belongs to the imidazoleglycerol-phosphate dehydratase family.

The protein localises to the cytoplasm. The enzyme catalyses D-erythro-1-(imidazol-4-yl)glycerol 3-phosphate = 3-(imidazol-4-yl)-2-oxopropyl phosphate + H2O. It functions in the pathway amino-acid biosynthesis; L-histidine biosynthesis; L-histidine from 5-phospho-alpha-D-ribose 1-diphosphate: step 6/9. This Anaeromyxobacter sp. (strain Fw109-5) protein is Imidazoleglycerol-phosphate dehydratase.